Reading from the N-terminus, the 86-residue chain is Small ribosomal subunit protein uS17 (86 aa).

The protein belongs to the universal ribosomal protein uS17 family. In terms of assembly, part of the 30S ribosomal subunit.

Functionally, one of the primary rRNA binding proteins, it binds specifically to the 5'-end of 16S ribosomal RNA. This is Small ribosomal subunit protein uS17 from Streptococcus thermophilus (strain CNRZ 1066).